The following is a 476-amino-acid chain: Aspartyl/glutamyl-tRNA(Asn/Gln) amidotransferase subunit B (476 aa).

The protein belongs to the GatB/GatE family. GatB subfamily. As to quaternary structure, heterotrimer of A, B and C subunits.

The catalysed reaction is L-glutamyl-tRNA(Gln) + L-glutamine + ATP + H2O = L-glutaminyl-tRNA(Gln) + L-glutamate + ADP + phosphate + H(+). It catalyses the reaction L-aspartyl-tRNA(Asn) + L-glutamine + ATP + H2O = L-asparaginyl-tRNA(Asn) + L-glutamate + ADP + phosphate + 2 H(+). Its function is as follows. Allows the formation of correctly charged Asn-tRNA(Asn) or Gln-tRNA(Gln) through the transamidation of misacylated Asp-tRNA(Asn) or Glu-tRNA(Gln) in organisms which lack either or both of asparaginyl-tRNA or glutaminyl-tRNA synthetases. The reaction takes place in the presence of glutamine and ATP through an activated phospho-Asp-tRNA(Asn) or phospho-Glu-tRNA(Gln). This is Aspartyl/glutamyl-tRNA(Asn/Gln) amidotransferase subunit B from Thermosipho melanesiensis (strain DSM 12029 / CIP 104789 / BI429).